Here is a 301-residue protein sequence, read N- to C-terminus: MEKETKSLAWPATAEFYGWVFIFSSIQLCTVVFLTVRFNGFKVGREYAVFTFAGMSFNCFLLPIKMGLLSGHWTLPRDFCAILLYIDDFSAYFSSWSLVFMAIERINYFCYSTPLLNENSKALAKVCFPIVWVVSGVQALQMLNNYKATALQNETGQCFLAFLRSGHDMWLMLVYSVVIPVMLVFFYLYSKNFMLLKDELSSVTTYLCIYLLLGTIAHLPKAALSEIESDKIFYGLRDIFMALPVLKVYYISAMAYCMACDDHTVPVRLCSIWLVNLCKKCFSCTRREKGSDLEVGIKMLK.

The Extracellular portion of the chain corresponds to 1 to 15 (MEKETKSLAWPATAE). The chain crosses the membrane as a helical span at residues 16–36 (FYGWVFIFSSIQLCTVVFLTV). The Cytoplasmic portion of the chain corresponds to 37-48 (RFNGFKVGREYA). The chain crosses the membrane as a helical span at residues 49–69 (VFTFAGMSFNCFLLPIKMGLL). Over 70-82 (SGHWTLPRDFCAI) the chain is Extracellular. A helical membrane pass occupies residues 83–103 (LLYIDDFSAYFSSWSLVFMAI). Residues 104 to 122 (ERINYFCYSTPLLNENSKA) are Cytoplasmic-facing. Residues 123 to 143 (LAKVCFPIVWVVSGVQALQML) traverse the membrane as a helical segment. The Extracellular portion of the chain corresponds to 144–168 (NNYKATALQNETGQCFLAFLRSGHD). Residue N153 is glycosylated (N-linked (GlcNAc...) asparagine; by host). The chain crosses the membrane as a helical span at residues 169-189 (MWLMLVYSVVIPVMLVFFYLY). Residues 190 to 199 (SKNFMLLKDE) lie on the Cytoplasmic side of the membrane. A helical transmembrane segment spans residues 200-220 (LSSVTTYLCIYLLLGTIAHLP). At 221–238 (KAALSEIESDKIFYGLRD) the chain is on the extracellular side. The helical transmembrane segment at 239-259 (IFMALPVLKVYYISAMAYCMA) threads the bilayer. The Cytoplasmic portion of the chain corresponds to 260 to 301 (CDDHTVPVRLCSIWLVNLCKKCFSCTRREKGSDLEVGIKMLK).

This sequence belongs to the G-protein coupled receptor 1 family.

It is found in the host cell membrane. The protein is G-protein coupled receptor homolog U51 (U51) of Homo sapiens (Human).